A 215-amino-acid polypeptide reads, in one-letter code: HTH-type transcriptional regulator for conjugative element R391 (215 aa).

The HTH cro/C1-type domain maps to 8-61 (LNHALQLTGVTQSELARRIGIKQQSISQICSGKSARSRYTMQIAEALRVNAHWL). The H-T-H motif DNA-binding region spans 19–38 (QSELARRIGIKQQSISQICS).

Functionally, may control the expression of the integrase and inhibit excision of the mobile element R391, and regulate the expression of other genes as well. The sequence is that of HTH-type transcriptional regulator for conjugative element R391 from Providencia rettgeri.